The primary structure comprises 231 residues: Orotidine 5'-phosphate decarboxylase (231 aa).

Residues Asp-11, Lys-34, 61 to 70 (DLKLHDIPNT), Thr-117, Arg-179, Gln-188, Gly-208, and Arg-209 contribute to the substrate site. The Proton donor role is filled by Lys-63.

The protein belongs to the OMP decarboxylase family. Type 1 subfamily. In terms of assembly, homodimer.

It carries out the reaction orotidine 5'-phosphate + H(+) = UMP + CO2. The protein operates within pyrimidine metabolism; UMP biosynthesis via de novo pathway; UMP from orotate: step 2/2. Catalyzes the decarboxylation of orotidine 5'-monophosphate (OMP) to uridine 5'-monophosphate (UMP). The sequence is that of Orotidine 5'-phosphate decarboxylase from Streptococcus thermophilus (strain ATCC BAA-491 / LMD-9).